An 875-amino-acid polypeptide reads, in one-letter code: MEGEVATNGVILKHNGVKDISLETCWPEKKKPVEATSLSSGSSDIEEEISVECPKRVANQRRKRSKADEIKTKSSRKRKCDDENKCEENEKKQRSSVKKRATTWKEEEVVVDDEKKCEQQLQLVPSSKATSRSRSKKSVSVDTWLVNNEIDVSALSSRSESELSDSYLKTEYFNDCRSMTRSLKANLGELAICHQCSKGERRYLFICTFCEVRLYCFPCIKKWYPHLSTDDILEKCPFCRGTCNCCTCLHSSGLIETSKRKLDKYERFYHLRFLIVAMLPFLKKLCKAQDQEIETEAKVQDSMASQVDISESLCSNEERVFCNHCATSIVDLHRSCPKCSYELCLNCCQEIRGGWLSDRPECQLQFEYRGTRYIHGEAAEPSSSSVSEDETKTPSIKWNADENGSIRCAPKELGGCGDSVLELKRILPVTWMSDLEQKAETFLASYSIKPPMSYCRCSSDMSSMKRKAASRDGSSDNYLYSPDSLDVLKQEELLHFQEHWSKGEPVIVRNALNNTAGLSWEPMVMWRALCENVDSAISSNMSDVKAIDCLANCEVKINTLCFFEGYSKGRTYENFWPEMLKLKDWPPSDKFENLLPRHCDEFISALPFQEYSDPRSGILNIATKLPEGLLKPDLGPKTYVAYGTSDELGRGDSVTKLHCDMSDAVNILMHTAEVTLSEEQRSAIADLKQKHKQQNEKELQEQNGLEEEEVVSDEIVVYDETSGALWDIFKREDVPKLEEYLRKHCIEFRHTYCSRVTKVYHPIHDQSYFLTVEHKRKLKAEFGIEPWTFVQKLGEAVFIPAGCPHQVRNLKSCTKVAVDFVSPENIDECLRLTDEFRQLPKNHKAREDKLEIKKMVIYAVEQALKEVETLLLDRS.

The interval 31–103 (KPVEATSLSS…RSSVKKRATT (73 aa)) is disordered. A Nuclear localization signal motif is present at residues 62-69 (RKRSKADE). A compositionally biased stretch (basic and acidic residues) spans 79 to 93 (KCDDENKCEENEKKQ). Zn(2+) contacts are provided by C193, C196, C207, C210, C216, C219, C236, C239, C322, C325, C339, and C347. The RING-type; degenerate zinc-finger motif lies at 193 to 240 (CHQCSKGERRYLFICTFCEVRLYCFPCIKKWYPHLSTDDILEKCPFCR). A B box-type; degenerate zinc finger spans residues 317–347 (EERVFCNHCATSIVDLHRSCPKCSYELCLNC). The 224-residue stretch at 614–837 (PRSGILNIAT…ECLRLTDEFR (224 aa)) folds into the JmjC domain. Fe cation is bound by residues H658, D660, and H805.

The protein belongs to the JARID1 histone demethylase family. Fe(2+) serves as cofactor. Expressed in inflorescences, roots, siliques, leaves and stems.

The protein localises to the nucleus. Its function is as follows. May function as histone H3 lysine demethylase and be involved in regulation of gene expression. This Arabidopsis thaliana (Mouse-ear cress) protein is Lysine-specific demethylase JMJ26.